A 339-amino-acid chain; its full sequence is DNA-directed RNA polymerase subunit alpha (339 aa).

The alpha N-terminal domain (alpha-NTD) stretch occupies residues 1–233 (MVREEVAGST…DLFLPFLHAE (233 aa)). Residues 264 to 339 (KKGIPLNCIF…IDLLKNKLSF (76 aa)) are alpha C-terminal domain (alpha-CTD).

The protein belongs to the RNA polymerase alpha chain family. As to quaternary structure, in plastids the minimal PEP RNA polymerase catalytic core is composed of four subunits: alpha, beta, beta', and beta''. When a (nuclear-encoded) sigma factor is associated with the core the holoenzyme is formed, which can initiate transcription.

The protein resides in the plastid. It is found in the chloroplast. It carries out the reaction RNA(n) + a ribonucleoside 5'-triphosphate = RNA(n+1) + diphosphate. DNA-dependent RNA polymerase catalyzes the transcription of DNA into RNA using the four ribonucleoside triphosphates as substrates. The sequence is that of DNA-directed RNA polymerase subunit alpha from Australopyrum velutinum (Mountain wheat-grass).